Here is a 1305-residue protein sequence, read N- to C-terminus: ABC transporter FPSE_09185 (1305 aa).

Asparagine 28 carries N-linked (GlcNAc...) asparagine glycosylation. 6 helical membrane-spanning segments follow: residues 44-64, 99-119, 172-192, 199-219, 277-297, and 312-332; these read FCVY…MPLM, LYIV…KFCF, RLGT…VAFT, IVSA…VPIY, IIGA…GLAF, and VGVV…FSYL. In terms of domain architecture, ABC transmembrane type-1 1 spans 48–348; the sequence is VVGALASIGV…ISQAMVAATE (301 aa). An ABC transporter 1 domain is found at 372–663; that stretch reads LIFKDVTFEY…ENGVYYSLVE (292 aa). Residue 407–414 participates in ATP binding; it reads GPSGSGKS. Positions 434–454 are disordered; that stretch reads EAATPRSSKEGERDNHDERKY. A compositionally biased stretch (basic and acidic residues) spans 440–454; sequence SSKEGERDNHDERKY. 3 N-linked (GlcNAc...) asparagine glycosylation sites follow: asparagine 468, asparagine 507, and asparagine 525. 6 consecutive transmembrane segments (helical) span residues 737-757, 780-800, 851-873, 877-899, 964-984, and 999-1019; these read FLLI…QAWL, GFMW…QCWI, GVFG…CLII, FGWK…SGFW, AVIF…ILWY, and FMVS…ILGV. The ABC transmembrane type-1 2 domain maps to 738 to 1025; that stretch reads LLITIASMGV…ILGVAPSAAQ (288 aa). Residues 1038 to 1057 are disordered; the sequence is DSNRSSQEAEKSGPTVEDTD. N-linked (GlcNAc...) asparagine glycans are attached at residues asparagine 1040, asparagine 1066, and asparagine 1075. Residues 1062-1300 enclose the ABC transporter 2 domain; it reads IELCNVSFKY…RGIYWDMCQT (239 aa). 1096–1103 provides a ligand contact to ATP; that stretch reads GPSGCGKT. Asparagine 1125 carries an N-linked (GlcNAc...) asparagine glycan.

This sequence belongs to the ABC transporter superfamily. ABCB family. Multidrug resistance exporter (TC 3.A.1.201) subfamily.

It is found in the membrane. Functionally, ABC transporter; part of the gene cluster that mediates the biosynthesis of the lipopeptides W493 A and B. W493 A and B consist of six amino acid residues D-allo-thr, L-Ala, D-Ala, L-Gln, D-Tyr, and L-Val/L-Ile linked to a 3-hydroxy-4-methyltetradecanoic acid polyketide chain. May be involved in excretion or internal transport of W493 A and B. The polypeptide is ABC transporter FPSE_09185 (Fusarium pseudograminearum (strain CS3096) (Wheat and barley crown-rot fungus)).